The following is a 316-amino-acid chain: Pantothenate kinase (316 aa).

Residue 95 to 102 (GSVAVGKS) participates in ATP binding.

This sequence belongs to the prokaryotic pantothenate kinase family.

Its subcellular location is the cytoplasm. The catalysed reaction is (R)-pantothenate + ATP = (R)-4'-phosphopantothenate + ADP + H(+). It functions in the pathway cofactor biosynthesis; coenzyme A biosynthesis; CoA from (R)-pantothenate: step 1/5. The chain is Pantothenate kinase from Shewanella oneidensis (strain ATCC 700550 / JCM 31522 / CIP 106686 / LMG 19005 / NCIMB 14063 / MR-1).